Consider the following 569-residue polypeptide: Phosphoglucomutase 2 (569 aa).

A disordered region spans residues 1–23 (MSFQIETVPTKPYEDQKPGTSGL). Residue Ser2 is modified to N-acetylserine. Alpha-D-glucose 1,6-bisphosphate is bound at residue Arg24. Phosphothreonine is present on residues Thr111 and Thr117. Ser119 contributes to the alpha-D-glucose 1,6-bisphosphate binding site. Catalysis depends on Ser119, which acts as the Phosphoserine intermediate. Ser119, Asp290, Asp292, and Asp294 together coordinate Mg(2+). A Phosphoserine modification is found at Ser119. The alpha-D-glucose 1,6-bisphosphate site is built by Asp294, Arg295, Thr359, Glu378, Ser380, and Lys391.

The protein belongs to the phosphohexose mutase family. Monomer. The cofactor is Mg(2+). Zn(2+) serves as cofactor. Post-translationally, O-glycosylated with mannose residues. Substrate of UDP-glucose--glycoprotein glucose phosphotransferase, linking glucose in a phosphodiester linkage to O-linked mannose.

It is found in the cytoplasm. It catalyses the reaction alpha-D-glucose 1-phosphate = alpha-D-glucose 6-phosphate. The catalysed reaction is O-phospho-L-seryl-[protein] + alpha-D-glucose 1-phosphate = alpha-D-glucose 1,6-bisphosphate + L-seryl-[protein]. It carries out the reaction alpha-D-glucose 1,6-bisphosphate + L-seryl-[protein] = O-phospho-L-seryl-[protein] + alpha-D-glucose 6-phosphate. In terms of biological role, major phosphoglucomutase isozyme that catalyzes the reversible isomerization of alpha-D-glucose 1-phosphate to alpha-D-glucose 6-phosphate. The mechanism proceeds via the intermediate compound alpha-D-glucose 1,6-bisphosphate. Constitutes about 80-90% of the phosphoglucomutase activity in the cell. Key enzyme in hexose metabolism. The forward reaction is an essential step in the energy metabolism of galactose since the product of the galactose pathway enzymes in yeast is glucose 1-phosphate. The reverse reaction is an essential step for biosynthesis when carbon sources other than galactose are the energy source because glucose 1-phosphate is the starting point for the synthesis of UDP-glucose, which acts as a precursor for the synthesis of oligosaccharides and trehalose. The polypeptide is Phosphoglucomutase 2 (Saccharomyces cerevisiae (strain ATCC 204508 / S288c) (Baker's yeast)).